The chain runs to 415 residues: MSTPDRRRAVVTGLSVAAPGGLGTERYWKSLLTGENGIAELSRFDASRYPSRLAGQIDDFEASEHLPSRLLPQTDVSTRYALAAADWALADAGVGPESGLDDYDLGVVTSTAQGGFDFTHREFHKLWSQGPAYVSVYESFAWFYAVNTGQISIRNTMRGPSAALVGEQAGGLDAIGHARRTVRRGPGWCSAVASTRRSTRGASSSQLSGGLVSTVADPERAYLPFDVDASGYVPGEGGAVLIVEDADSARARGAERIYVRSPLRRDPAPGSGRPPALGRAAELALAEAGLTPADISVVFADGAGVPELDRAEADTLARLFGPRGVPVTAPKALTGRLCAGGGPADLAAALLALRDQVIPATGRHRAVPDAYALDLVTGRPREAALSAALVLARGRHGFNSAVVVTLRGSDHRRPT.

A Ketosynthase family 3 (KS3) domain is found at 6–406 (RRRAVVTGLS…GFNSAVVVTL (401 aa)).

This sequence belongs to the thiolase-like superfamily. Beta-ketoacyl-ACP synthases family.

The protein operates within antibiotic biosynthesis; granaticin biosynthesis. In Streptomyces violaceoruber, this protein is Granaticin polyketide putative beta-ketoacyl synthase 2 (gra-orf2).